The following is a 105-amino-acid chain: Small ribosomal subunit protein uS10 (105 aa).

This sequence belongs to the universal ribosomal protein uS10 family. As to quaternary structure, part of the 30S ribosomal subunit.

Functionally, involved in the binding of tRNA to the ribosomes. The sequence is that of Small ribosomal subunit protein uS10 from Rickettsia akari (strain Hartford).